The primary structure comprises 177 residues: MAADQGMLRDAMARVPAGVALVTAHDRGGVPHGFTASSFVSVSMEPPLALVCLARTANSFPVFDSCGEFAVSVLREDHTDLAMRFARKSADKFAGGEFVRTARGATVLDGAVAVVECTVHERYPAGDHIILLGEVQSVHVEEKGVPAVYVDRRFAALCSAAGACPSATGRGVPAHAG.

The protein to S.pristinaespiralis SnaC.

It participates in antibiotic biosynthesis; actinorhodin biosynthesis. This Streptomyces coelicolor (strain ATCC BAA-471 / A3(2) / M145) protein is Actinorhodin polyketide dimerase (actVB).